Reading from the N-terminus, the 175-residue chain is Ribosome maturation factor RimM (175 aa).

One can recognise a PRC barrel domain in the interval 96–175 (EEDYYWHDLI…TITVDWDAGF (80 aa)).

It belongs to the RimM family. In terms of assembly, binds ribosomal protein uS19.

It localises to the cytoplasm. An accessory protein needed during the final step in the assembly of 30S ribosomal subunit, possibly for assembly of the head region. Essential for efficient processing of 16S rRNA. May be needed both before and after RbfA during the maturation of 16S rRNA. It has affinity for free ribosomal 30S subunits but not for 70S ribosomes. The protein is Ribosome maturation factor RimM of Haemophilus ducreyi (strain 35000HP / ATCC 700724).